A 267-amino-acid chain; its full sequence is U6 snRNA phosphodiesterase 1 (267 aa).

The tract at residues 1–72 is disordered; sequence MNAAPLVGYS…EDDSARHGGR (72 aa). The Proton acceptor role is filled by His122. AMP is bound at residue 122–124; that stretch reads HLS. UMP is bound by residues Gln166, Tyr204, and 208-212; that span reads SFHVS. Residues Tyr204 and 206 to 212 contribute to the AMP site; that span reads DPSFHVS. His210 functions as the Proton donor in the catalytic mechanism.

It belongs to the 2H phosphoesterase superfamily. USB1 family. In terms of assembly, interacts with PLRG1, CDC5L and PRPF19.

The protein localises to the nucleus. The enzyme catalyses a 3'-end uridylyl-uridine-RNA = a 3'-end 2',3'-cyclophospho-uridine-RNA + uridine. It catalyses the reaction a 3'-end uridylyl-adenosine-RNA = a 3'-end 2',3'-cyclophospho-uridine-RNA + adenosine. 3'-5' RNA exonuclease that trims the 3' end of oligo(U) and oligo(A) tracts of the pre-U6 small nuclear RNA (snRNA) molecule, leading to the formation of a mature U6 snRNA 3' end-terminated with a 2',3'-cyclic phosphate. Participates in the U6 snRNA 3' end processing that prevents U6 snRNA degradation. In addition also removes uridines from the 3' end of U6atac snRNA and possibly the vault RNA VTRNA1-1. In Rattus norvegicus (Rat), this protein is U6 snRNA phosphodiesterase 1.